The primary structure comprises 163 residues: UPF0416 protein RBE_1121 (163 aa).

The protein belongs to the UPF0416 family.

This chain is UPF0416 protein RBE_1121, found in Rickettsia bellii (strain RML369-C).